A 140-amino-acid polypeptide reads, in one-letter code: Methylglyoxal synthase (140 aa).

The 140-residue stretch at 1-140 folds into the MGS-like domain; sequence MNIALIAHDE…KERQEKEGTP (140 aa). Substrate-binding positions include His8, Lys12, 34–37, and 54–55; these read TGTT and SG. The active-site Proton donor/acceptor is the Asp60. His87 serves as a coordination point for substrate.

The protein belongs to the methylglyoxal synthase family.

The catalysed reaction is dihydroxyacetone phosphate = methylglyoxal + phosphate. Catalyzes the formation of methylglyoxal from dihydroxyacetone phosphate. The sequence is that of Methylglyoxal synthase from Oceanobacillus iheyensis (strain DSM 14371 / CIP 107618 / JCM 11309 / KCTC 3954 / HTE831).